A 238-amino-acid polypeptide reads, in one-letter code: Ribonuclease PH (238 aa).

Residues Arg-86 and Gly-124–Arg-126 each bind phosphate.

This sequence belongs to the RNase PH family. Homohexameric ring arranged as a trimer of dimers.

It carries out the reaction tRNA(n+1) + phosphate = tRNA(n) + a ribonucleoside 5'-diphosphate. Phosphorolytic 3'-5' exoribonuclease that plays an important role in tRNA 3'-end maturation. Removes nucleotide residues following the 3'-CCA terminus of tRNAs; can also add nucleotides to the ends of RNA molecules by using nucleoside diphosphates as substrates, but this may not be physiologically important. Probably plays a role in initiation of 16S rRNA degradation (leading to ribosome degradation) during starvation. This chain is Ribonuclease PH, found in Erwinia tasmaniensis (strain DSM 17950 / CFBP 7177 / CIP 109463 / NCPPB 4357 / Et1/99).